The primary structure comprises 221 residues: Oxaloacetate tautomerase FAHD1, mitochondrial (221 aa).

Residues 1-24 (MASTKPLSRFWEWGKNIVCVGRNY) constitute a mitochondrion transit peptide. Arg-22 is a binding site for oxalate. A Phosphoserine modification is found at Ser-37. Positions 68, 70, and 99 each coordinate Mg(2+). N6-acetyllysine is present on Lys-110. Position 112 is an N6-succinyllysine (Lys-112). Lys-120 contributes to the oxalate binding site.

The protein belongs to the FAH family. In terms of assembly, homodimer. Requires Mg(2+) as cofactor. It depends on Mn(2+) as a cofactor. As to expression, ubiquitous with higher expression in the liver and the kidney (at protein level).

It localises to the mitochondrion. The protein localises to the cytoplasm. It is found in the cytosol. The catalysed reaction is oxaloacetate = enol-oxaloacetate. The enzyme catalyses oxaloacetate + H(+) = pyruvate + CO2. It carries out the reaction a 3-acylpyruvate + H2O = a carboxylate + pyruvate + H(+). It catalyses the reaction acetylpyruvate + H2O = acetate + pyruvate + H(+). The catalysed reaction is 3-fumarylpyruvate + H2O = fumarate + pyruvate + H(+). With respect to regulation, oxaloacetate decarboxylation is potently and competitively inhibited by oxalate. Its function is as follows. Tautomerase that converts enol-oxaloacetate, a strong inhibitor of succinate dehydrogenase, to the physiological keto form of oxaloacetate. It is thereby required to maximize aerobic respiration efficiency by preventing succinate dehydrogenase inhibition. Also acts as a weak oxaloacetate decarboxylase (ODx), catalyzing the decarboxylation of oxaloacetate (OAA) to pyruvate and CO(2), and as such is likely a regulatory enzyme in the TCA cycle. Also displays acylpyruvase activity, being able to hydrolyze acetylpyruvate and fumarylpyruvate in vitro. In Mus musculus (Mouse), this protein is Oxaloacetate tautomerase FAHD1, mitochondrial.